The chain runs to 154 residues: Large ribosomal subunit protein uL15 (154 aa).

The disordered stretch occupies residues M1–V44. Residues R21–V35 are compositionally biased toward gly residues.

Belongs to the universal ribosomal protein uL15 family. In terms of assembly, part of the 50S ribosomal subunit.

Its function is as follows. Binds to the 23S rRNA. This Bartonella quintana (strain Toulouse) (Rochalimaea quintana) protein is Large ribosomal subunit protein uL15.